The chain runs to 154 residues: 6,7-dimethyl-8-ribityllumazine synthase (154 aa).

5-amino-6-(D-ribitylamino)uracil contacts are provided by residues F22, 56 to 58 (AFE), and 80 to 82 (AVI). Residue 85–86 (AT) coordinates (2S)-2-hydroxy-3-oxobutyl phosphate. Catalysis depends on H88, which acts as the Proton donor. F113 contacts 5-amino-6-(D-ribitylamino)uracil. R127 is a (2S)-2-hydroxy-3-oxobutyl phosphate binding site.

The protein belongs to the DMRL synthase family.

It carries out the reaction (2S)-2-hydroxy-3-oxobutyl phosphate + 5-amino-6-(D-ribitylamino)uracil = 6,7-dimethyl-8-(1-D-ribityl)lumazine + phosphate + 2 H2O + H(+). Its pathway is cofactor biosynthesis; riboflavin biosynthesis; riboflavin from 2-hydroxy-3-oxobutyl phosphate and 5-amino-6-(D-ribitylamino)uracil: step 1/2. Its function is as follows. Catalyzes the formation of 6,7-dimethyl-8-ribityllumazine by condensation of 5-amino-6-(D-ribitylamino)uracil with 3,4-dihydroxy-2-butanone 4-phosphate. This is the penultimate step in the biosynthesis of riboflavin. The sequence is that of 6,7-dimethyl-8-ribityllumazine synthase from Clostridium botulinum (strain Okra / Type B1).